We begin with the raw amino-acid sequence, 352 residues long: UDP-N-acetylglucosamine--N-acetylmuramyl-(pentapeptide) pyrophosphoryl-undecaprenol N-acetylglucosamine transferase (352 aa).

Residues 13–15 (TGG), Asn-125, Arg-161, Ser-189, Ile-242, 261–266 (ALTVSE), and Gln-286 contribute to the UDP-N-acetyl-alpha-D-glucosamine site.

This sequence belongs to the glycosyltransferase 28 family. MurG subfamily.

The protein localises to the cell inner membrane. It catalyses the reaction di-trans,octa-cis-undecaprenyl diphospho-N-acetyl-alpha-D-muramoyl-L-alanyl-D-glutamyl-meso-2,6-diaminopimeloyl-D-alanyl-D-alanine + UDP-N-acetyl-alpha-D-glucosamine = di-trans,octa-cis-undecaprenyl diphospho-[N-acetyl-alpha-D-glucosaminyl-(1-&gt;4)]-N-acetyl-alpha-D-muramoyl-L-alanyl-D-glutamyl-meso-2,6-diaminopimeloyl-D-alanyl-D-alanine + UDP + H(+). It functions in the pathway cell wall biogenesis; peptidoglycan biosynthesis. Functionally, cell wall formation. Catalyzes the transfer of a GlcNAc subunit on undecaprenyl-pyrophosphoryl-MurNAc-pentapeptide (lipid intermediate I) to form undecaprenyl-pyrophosphoryl-MurNAc-(pentapeptide)GlcNAc (lipid intermediate II). This Erwinia tasmaniensis (strain DSM 17950 / CFBP 7177 / CIP 109463 / NCPPB 4357 / Et1/99) protein is UDP-N-acetylglucosamine--N-acetylmuramyl-(pentapeptide) pyrophosphoryl-undecaprenol N-acetylglucosamine transferase.